The chain runs to 298 residues: Tyrosine recombinase XerC (298 aa).

The region spanning M1 to V83 is the Core-binding (CB) domain. Positions H104 to D283 constitute a Tyr recombinase domain. Catalysis depends on residues R144, K166, H235, R238, and H261. Catalysis depends on Y270, which acts as the O-(3'-phospho-DNA)-tyrosine intermediate.

The protein belongs to the 'phage' integrase family. XerC subfamily. As to quaternary structure, forms a cyclic heterotetrameric complex composed of two molecules of XerC and two molecules of XerD.

The protein localises to the cytoplasm. Its function is as follows. Site-specific tyrosine recombinase, which acts by catalyzing the cutting and rejoining of the recombining DNA molecules. The XerC-XerD complex is essential to convert dimers of the bacterial chromosome into monomers to permit their segregation at cell division. It also contributes to the segregational stability of plasmids. In Chromohalobacter salexigens (strain ATCC BAA-138 / DSM 3043 / CIP 106854 / NCIMB 13768 / 1H11), this protein is Tyrosine recombinase XerC.